A 729-amino-acid polypeptide reads, in one-letter code: MGPLLRSSPPPRHLRLLLRRLLSTAAGRPSRLLPLPASSSARLLVRPRVAVAAAAAGAPLRRNGVAVRAFMASTAASEAMQEKRVAGEYTAANVQVLEALDGVRTRPGMYIGSTGSRGLHHLVYEILDNAVDEAQAGYATKVDVILHGDNSVSVTDNGRGIPTDIHPQTKKSCVETVLTLMHAGGKFGGSKSGYTVSGGLHGVGLSVVNALSEALEVTVWRDGKEYRQNYSRGKAITMLTSRTLSDESSSRQGTRIRFWPDKHIFTTTMDFDFNTIAGRIRELAFLNPELTIALTKEEDDLQVQHNEYCYAGGLVEYVKWLNTDKKSLHDPIAFRKEMDGITVDVSLQWCSDSYSDTVLGYANSIRTIDGGTHIDGLKTSLTRTINNFAKKSKTLKDKDISLSGEHVREGMTCIIAVKVPNPEFEGQTKTRLGNPEVRRIVEQSVQENLTEYLELHPDVLDSILSKSLNALKAALAAKRARELVRTKSVLKSSSLPGKLADCASSDPEESEIFIVEGDSAGGSAKQGRDRKFQAILPLRGKILNIERRDEAALYKNEEIQNLIVALGLGVKGEDFNKEALRYHKIVILTDADVDGAHIRTLLLTFFFRYQKALFDEGCIYVGVPPLYKVERGKQAHYCYDDADLKELVNTFPTNASYHIQRFKGLGEMMPAQLWETTMDPERRMLKQLKVEDAAEANVVFSSLMGTRVDVRKQLIQNAASMVNLEHLDI.

A Toprim domain is found at 510 to 617 (SEIFIVEGDS…RYQKALFDEG (108 aa)). Mg(2+)-binding residues include E516, D590, and D592.

This sequence belongs to the type II topoisomerase GyrB family. In terms of assembly, made up of two chains. The A chain is responsible for DNA breakage and rejoining; the B chain catalyzes ATP hydrolysis. Requires Mg(2+) as cofactor. It depends on Mn(2+) as a cofactor. Ca(2+) is required as a cofactor.

The protein localises to the plastid. It is found in the chloroplast. It localises to the mitochondrion. It carries out the reaction ATP-dependent breakage, passage and rejoining of double-stranded DNA.. Functionally, a type II topoisomerase that negatively supercoils closed circular double-stranded DNA in an ATP-dependent manner. The polypeptide is DNA gyrase subunit B, chloroplastic/mitochondrial (GYRB) (Oryza sativa subsp. japonica (Rice)).